Reading from the N-terminus, the 248-residue chain is 2-acetamido-2-deoxy-D-galactose-binding seed lectin 2 (248 aa).

Asparagine 119 carries an N-linked (GlcNAc...) asparagine; partial glycan. Positions 128 and 130 each coordinate Mn(2+). Aspartate 130, tyrosine 132, asparagine 134, and aspartate 138 together coordinate Ca(2+). The Mn(2+) site is built by aspartate 138 and histidine 144.

It belongs to the leguminous lectin family.

The polypeptide is 2-acetamido-2-deoxy-D-galactose-binding seed lectin 2 (Cytisus scoparius (Scotch broom)).